A 225-amino-acid chain; its full sequence is Urease accessory protein UreF (225 aa).

This sequence belongs to the UreF family. UreD, UreF and UreG form a complex that acts as a GTP-hydrolysis-dependent molecular chaperone, activating the urease apoprotein by helping to assemble the nickel containing metallocenter of UreC. The UreE protein probably delivers the nickel.

It is found in the cytoplasm. In terms of biological role, required for maturation of urease via the functional incorporation of the urease nickel metallocenter. This is Urease accessory protein UreF from Thermosynechococcus vestitus (strain NIES-2133 / IAM M-273 / BP-1).